Consider the following 69-residue polypeptide: Cytochrome c oxidase subunit 8A, mitochondrial (69 aa).

The transit peptide at 1-25 (MSVLTPLLLRGLTGSARRLPVPRAK) directs the protein to the mitochondrion. The SIFI-degron motif lies at 2-19 (SVLTPLLLRGLTGSARRL). The Mitochondrial matrix segment spans residues 26-36 (IHSLPPDEKLG). Residues 37–60 (IMELAVGLTSCFVTFLLPAGWILS) traverse the membrane as a helical segment. At 61 to 69 (HLETYRRPE) the chain is on the mitochondrial intermembrane side.

Belongs to the cytochrome c oxidase VIII family. In terms of assembly, component of the cytochrome c oxidase (complex IV, CIV), a multisubunit enzyme composed of 14 subunits. The complex is composed of a catalytic core of 3 subunits MT-CO1, MT-CO2 and MT-CO3, encoded in the mitochondrial DNA, and 11 supernumerary subunits COX4I, COX5A, COX5B, COX6A, COX6B, COX6C, COX7A, COX7B, COX7C, COX8 and NDUFA4, which are encoded in the nuclear genome. The complex exists as a monomer or a dimer and forms supercomplexes (SCs) in the inner mitochondrial membrane with NADH-ubiquinone oxidoreductase (complex I, CI) and ubiquinol-cytochrome c oxidoreductase (cytochrome b-c1 complex, complex III, CIII), resulting in different assemblies (supercomplex SCI(1)III(2)IV(1) and megacomplex MCI(2)III(2)IV(2)). In terms of processing, in response to mitochondrial stress, the precursor protein is ubiquitinated by the SIFI complex in the cytoplasm before mitochondrial import, leading to its degradation. Within the SIFI complex, UBR4 initiates ubiquitin chain that are further elongated or branched by KCMF1.

The protein localises to the mitochondrion inner membrane. It participates in energy metabolism; oxidative phosphorylation. Component of the cytochrome c oxidase, the last enzyme in the mitochondrial electron transport chain which drives oxidative phosphorylation. The respiratory chain contains 3 multisubunit complexes succinate dehydrogenase (complex II, CII), ubiquinol-cytochrome c oxidoreductase (cytochrome b-c1 complex, complex III, CIII) and cytochrome c oxidase (complex IV, CIV), that cooperate to transfer electrons derived from NADH and succinate to molecular oxygen, creating an electrochemical gradient over the inner membrane that drives transmembrane transport and the ATP synthase. Cytochrome c oxidase is the component of the respiratory chain that catalyzes the reduction of oxygen to water. Electrons originating from reduced cytochrome c in the intermembrane space (IMS) are transferred via the dinuclear copper A center (CU(A)) of subunit 2 and heme A of subunit 1 to the active site in subunit 1, a binuclear center (BNC) formed by heme A3 and copper B (CU(B)). The BNC reduces molecular oxygen to 2 water molecules using 4 electrons from cytochrome c in the IMS and 4 protons from the mitochondrial matrix. The chain is Cytochrome c oxidase subunit 8A, mitochondrial (COX8A) from Gorilla gorilla gorilla (Western lowland gorilla).